The primary structure comprises 91 residues: uncharacterized protein (91 aa).

This is an uncharacterized protein from Rickettsia conorii (strain ATCC VR-613 / Malish 7).